The primary structure comprises 505 residues: DNA primase large subunit (505 aa).

The segment at 253–270 (LSHSYTGQDYSTQKNTGK) is interdomain linker. The interval 266–503 (KNTGKISLDQ…LEMDLEGLEE (238 aa)) is interacts with PRIM1. [4Fe-4S] cluster-binding residues include C287, C367, C384, and C424. The segment at 300–442 (HLRHGGRMQY…NVDDCGFSLN (143 aa)) is RNA:DNA duplex binding. Positions 463 to 486 (KEISQPETPQHKPSTQKTRDAASA) are disordered. Residues 467 to 478 (QPETPQHKPSTQ) are compositionally biased toward polar residues. Residue T470 is modified to Phosphothreonine.

Belongs to the eukaryotic-type primase large subunit family. Heterodimer of a catalytic subunit PRIM1 and a regulatory subunit PRIM2, also known as the DNA primase complex. Interacts via (C-terminus) with PRIM1. Component of the alpha DNA polymerase complex (also known as the alpha DNA polymerase-primase complex) consisting of four subunits: the catalytic subunit POLA1, the regulatory subunit POLA2, and the primase complex subunits PRIM1 and PRIM2 respectively. Within the complex, POLA1 directly interacts with PRIM2. It depends on [4Fe-4S] cluster as a cofactor.

In terms of biological role, regulatory subunit of the DNA primase complex and component of the DNA polymerase alpha complex (also known as the alpha DNA polymerase-primase complex) which play an essential role in the initiation of DNA synthesis. During the S phase of the cell cycle, the DNA polymerase alpha complex (composed of a catalytic subunit POLA1, an accessory subunit POLA2 and two primase subunits, the catalytic subunit PRIM1 and the regulatory subunit PRIM2) is recruited to DNA at the replicative forks via direct interactions with MCM10 and WDHD1. The primase subunit of the polymerase alpha complex initiates DNA synthesis by oligomerising short RNA primers on both leading and lagging strands. These primers are initially extended by the polymerase alpha catalytic subunit and subsequently transferred to polymerase delta and polymerase epsilon for processive synthesis on the lagging and leading strand, respectively. In the primase complex, both subunits are necessary for the initial di-nucleotide formation, but the extension of the primer depends only on the catalytic subunit. Binds RNA:DNA duplex and coordinates the catalytic activities of PRIM1 and POLA2 during primase-to-polymerase switch. This chain is DNA primase large subunit (Prim2), found in Mus musculus (Mouse).